Here is a 52-residue protein sequence, read N- to C-terminus: Phospholamban (52 aa).

The residue at position 1 (M1) is an N-acetylmethionine. Residues 1-31 are Cytoplasmic-facing; that stretch reads MDKVQYLTRSAIRRASTIEMPQQARQNLQNL. Residue S16 is modified to Phosphoserine; by PKA and DMPK. The residue at position 17 (T17) is a Phosphothreonine; by CaMK2. Residues 32–52 traverse the membrane as a helical segment; that stretch reads FINFCLILICLLLICIIVMLL. A lipid anchor (S-palmitoyl cysteine) is attached at C36.

The protein belongs to the phospholamban family. Homopentamer. Can also form heterooligomers with other sarcoplasmic/endoplasmic reticulum calcium ATPase (SERCA) regulators ARLN, ERLN, SLN and STRIT1/DWORF. Monomer. Interacts with HAX1. Interacts as a monomer with ATP2A2; the interaction decreases ATP2A2 Ca(2+) affinity. Interacts with VMP1; VMP1 competes with PLN and SLN to prevent them from forming an inhibitory complex with ATP2A2. Interacts with S100A1 in a Ca(2+)-dependent manner. Phosphorylation by DMPK may stimulate sarcoplasmic reticulum calcium uptake in cardiomyocytes. Phosphorylation by PKA abolishes the inhibition of ATP2A2-mediated calcium uptake. Phosphorylated at Thr-17 by CaMK2, and in response to beta-adrenergic stimulation. In terms of processing, palmitoylated by ZDHHC16, promoting formation of the homopentamer. Post-translationally, in elongated spermatids, proteolytically cleaved by SPPL2C which modulates intracellular Ca(2+) homeostasis. In terms of tissue distribution, heart.

Its subcellular location is the endoplasmic reticulum membrane. It is found in the sarcoplasmic reticulum membrane. The protein localises to the mitochondrion membrane. The protein resides in the membrane. Its function is as follows. Reversibly inhibits the activity of ATP2A2/SERCA2 in cardiac sarcoplasmic reticulum by decreasing the apparent affinity of the ATPase for Ca(2+). Binds preferentially to the ATP-bound E1 conformational form of ATP2A2 which predominates at low Ca(2+) concentrations during the diastolic phase of the cardiac cycle. Inhibits ATP2A2 Ca(2+) affinity by disrupting its allosteric activation by ATP. Modulates the contractility of the heart muscle in response to physiological stimuli via its effects on ATP2A2. Modulates calcium re-uptake during muscle relaxation and plays an important role in calcium homeostasis in the heart muscle. The degree of ATP2A2 inhibition depends on the oligomeric state of PLN. ATP2A2 inhibition is alleviated by PLN phosphorylation. Also inhibits the activity of ATP2A3/SERCA3. Controls intracellular Ca(2+) levels in elongated spermatids and may play a role in germ cell differentiation. In the thalamic reticular nucleus of the brain, plays a role in the regulation of sleep patterns and executive functioning. The chain is Phospholamban from Canis lupus familiaris (Dog).